The chain runs to 357 residues: Holliday junction branch migration complex subunit RuvB (357 aa).

A compositionally biased stretch (low complexity) spans 1 to 15 (MAIQSDSLSSLPDSP). A disordered region spans residues 1–30 (MAIQSDSLSSLPDSPRIVAPQPVSPNEESI). A large ATPase domain (RuvB-L) region spans residues 13-195 (DSPRIVAPQP…FGIVSRLEFY (183 aa)). Residues leucine 34, arginine 35, glycine 76, lysine 79, threonine 80, threonine 81, 142 to 144 (EDF), arginine 185, tyrosine 195, and arginine 232 each bind ATP. Residue threonine 80 participates in Mg(2+) binding. Positions 196 to 266 (NTDELARIVT…AAGRALAMLD (71 aa)) are small ATPAse domain (RuvB-S). The head domain (RuvB-H) stretch occupies residues 269–357 (PQGLDVMDRK…SGGTGELFSK (89 aa)). The DNA site is built by arginine 305, arginine 324, and arginine 329.

The protein belongs to the RuvB family. In terms of assembly, homohexamer. Forms an RuvA(8)-RuvB(12)-Holliday junction (HJ) complex. HJ DNA is sandwiched between 2 RuvA tetramers; dsDNA enters through RuvA and exits via RuvB. An RuvB hexamer assembles on each DNA strand where it exits the tetramer. Each RuvB hexamer is contacted by two RuvA subunits (via domain III) on 2 adjacent RuvB subunits; this complex drives branch migration. In the full resolvosome a probable DNA-RuvA(4)-RuvB(12)-RuvC(2) complex forms which resolves the HJ.

The protein localises to the cytoplasm. It carries out the reaction ATP + H2O = ADP + phosphate + H(+). Its function is as follows. The RuvA-RuvB-RuvC complex processes Holliday junction (HJ) DNA during genetic recombination and DNA repair, while the RuvA-RuvB complex plays an important role in the rescue of blocked DNA replication forks via replication fork reversal (RFR). RuvA specifically binds to HJ cruciform DNA, conferring on it an open structure. The RuvB hexamer acts as an ATP-dependent pump, pulling dsDNA into and through the RuvAB complex. RuvB forms 2 homohexamers on either side of HJ DNA bound by 1 or 2 RuvA tetramers; 4 subunits per hexamer contact DNA at a time. Coordinated motions by a converter formed by DNA-disengaged RuvB subunits stimulates ATP hydrolysis and nucleotide exchange. Immobilization of the converter enables RuvB to convert the ATP-contained energy into a lever motion, pulling 2 nucleotides of DNA out of the RuvA tetramer per ATP hydrolyzed, thus driving DNA branch migration. The RuvB motors rotate together with the DNA substrate, which together with the progressing nucleotide cycle form the mechanistic basis for DNA recombination by continuous HJ branch migration. Branch migration allows RuvC to scan DNA until it finds its consensus sequence, where it cleaves and resolves cruciform DNA. This is Holliday junction branch migration complex subunit RuvB from Bordetella pertussis (strain Tohama I / ATCC BAA-589 / NCTC 13251).